The sequence spans 1806 residues: MTETLKARLEFPNSLIQAQAVRTLVAAVLKEKGQNEKICQTSTKGPALESLWEQCSSDSTVVRSACCNALVLLVEQGHADLPYVLNTTLNLLPSARNVQGLIKVVGRLLQIQAGQRENRASFTCPYSIRSFPHPYITVLENRPDCWPALLQEIDDFLQLATDKDEPVFVEMLVPFLRYLYCEPQRLSENALLRQSLLRVLLQPREAPESDRLEEKGASSTRVVRELIRSLFDLLPHMLVDSVTAVVELSSFAESLTAALISHPELWRKELTRLALQLLCACQLTIHLGGELMSLLHTLHHIIPAHAEELPAEQVIMGISLLLLNASVSQQTALLDLAVKIVPPELPPPWGASLLVMPLLHVLSCSSLMEALTDTQTHTKNQKLANSLLQTVQREPARRKEDSMQLDLPLSTWYSELQVAVSVLHRVSTDSTSSSEWLYSLQSSLSVCENVPDTVCLLVSHLIFRSDGDLCRLALETAAAIAEADPAKVPCLLPVLMFKLSRVSDPALSLSVLYTLPKLGTHKLCIPQVLHVLQTVGSSSRLRPVALRLLALLWKKQDRVYPDLQRLMCQLDKSSVVMGKDTQWEQILARAACVRDICRERPYQHGGDMLAAIRDTLLQFSRKDQATPVALALQALQELCRAEVVDICSTWKALSPKLLSDTRPLVLKATAELLALVPDLNVKTEEYEKFGSEAVGVLWGYALSQDSVVASQGFKALSEYPESSHTILHLPEQARPIPKQPEVEDEVKQNEEENEEEEDISVPGASYVKLVSLTSLSVLPALETFLTALVRQEMKQMPRGVYHSALTGGNLRSDQGKTVSGIPSFMLKMYEKNKQPGLKPGLAAGLLLCYDLPVQTDKDGRPIIRFLVSRGRSYQQMLATFIHEVNIQPSEWHRSLLLPQAWRGFMSRAFHALLQGRKAELEMLQKQGKESPEELQYQQHYAWLWVRDRLTDVVKSAAKDSPVVQGNSILALSGLAVVLTRYESNLPAQSESGPEAGPDIFPTVHWLSMVIDTLLSIVSSNSNPKAQVFPWFVHRSYSGENTASVIARSCAALGLALLVPVLVTWRRDSIPSILGTLEAGLPGSATADESQALQFHSGLALGMFLAWLLDERVSDISGQSVAELLMKHLKRLEVCCFDPNLEYNAGCVLGVGLVLSSLSSSSQCERDRVHVSHTLDRLLQSLQDSSNNSRMMQEVVAYSVACVGVSAFSAGIIEASKAEESMNTLRALTEESQQTPGFALALGQTVFGLSSFGHGKAVDIQPRLLAAWTKILLAEGCPTMQRLSALNGLIALVGSETALIQMKSECEETSLQHSRLNEVIRAITQIITFSGTIGLQSNGACLLGHLHLTHASSRHSRTAVPQDFGYLSESSVIRASVDFITEAGRKGPEFTAPQRVKTLLSALAAVGADFQYPPVNWSSVLSPLMRLGFGEEVQHYCLELAASQTQSSQSASLFLGVWLVPPLVHSLSLRTRAHLYESLSCWMKHVAEDKLQVYVDSLAVQQFEPLTRLQRLSLCLSILHGLSRAMTAPNPPQNCWSVLCSTAEKIYNLLPDSIPAAEVALYEAMCSCLSEMSDAEIDRIVKVSEANVEKTAFILSYLVSKGRVPLLGLNDVISTILQVGSKRPISWLLLQGLHQSRFASGPNTGVSKRMEWLLELMGHIRNVAYGSPSVKCVDVLQGTDFLLGVFAAAVVSWADHGGPLLVGIRARWFPWPQSAELCHGLYANPEDTELPVASCLLAIPYSIRKLLDKEPWKSQSQKFIDWLFSITEAPKQAFSETAVLTAKAALMALRSSSEFKKKTVWTRAYGW.

Positions 733-760 are disordered; it reads ARPIPKQPEVEDEVKQNEEENEEEEDIS.

It is found in the cell junction. The protein localises to the focal adhesion. It localises to the cytoplasm. The protein resides in the cytosol. Required for the maintenance of SKIC2 and SKIC3 proteostatic levels in the liver. May be involved in the regulation of RNA degradation by the exosome complex. This chain is Focadhesin (focad), found in Danio rerio (Zebrafish).